We begin with the raw amino-acid sequence, 129 residues long: MIVGMGTDIVAVERMARLHARFGERLTERLLGPLEVADMPVEAAAGAAFLARRFAAKEATFKALGSGMTNGMRWMDVQVGHDSGGRPQLVLGGRAQQLLRGLGDGVRSWLSISDERRYAMAVVVLERGG.

2 residues coordinate Mg(2+): Asp8 and Glu58.

It belongs to the P-Pant transferase superfamily. AcpS family. Requires Mg(2+) as cofactor.

The protein resides in the cytoplasm. The catalysed reaction is apo-[ACP] + CoA = holo-[ACP] + adenosine 3',5'-bisphosphate + H(+). Functionally, transfers the 4'-phosphopantetheine moiety from coenzyme A to a Ser of acyl-carrier-protein. In Acidithiobacillus ferrooxidans (strain ATCC 53993 / BNL-5-31) (Leptospirillum ferrooxidans (ATCC 53993)), this protein is Holo-[acyl-carrier-protein] synthase.